A 398-amino-acid chain; its full sequence is 1-deoxy-D-xylulose 5-phosphate reductoisomerase (398 aa).

The NADPH site is built by Thr14, Gly15, Ser16, Ile17, Gln42, and Asn128. Lys129 contributes to the 1-deoxy-D-xylulose 5-phosphate binding site. NADPH is bound at residue Glu130. Asp154 lines the Mn(2+) pocket. 1-deoxy-D-xylulose 5-phosphate contacts are provided by Ser155, Glu156, Ser185, and His208. Glu156 is a Mn(2+) binding site. Residue Gly214 coordinates NADPH. Positions 221, 226, 227, and 230 each coordinate 1-deoxy-D-xylulose 5-phosphate. Position 230 (Glu230) interacts with Mn(2+).

It belongs to the DXR family. Requires Mg(2+) as cofactor. Mn(2+) serves as cofactor.

The enzyme catalyses 2-C-methyl-D-erythritol 4-phosphate + NADP(+) = 1-deoxy-D-xylulose 5-phosphate + NADPH + H(+). Its pathway is isoprenoid biosynthesis; isopentenyl diphosphate biosynthesis via DXP pathway; isopentenyl diphosphate from 1-deoxy-D-xylulose 5-phosphate: step 1/6. Catalyzes the NADPH-dependent rearrangement and reduction of 1-deoxy-D-xylulose-5-phosphate (DXP) to 2-C-methyl-D-erythritol 4-phosphate (MEP). The polypeptide is 1-deoxy-D-xylulose 5-phosphate reductoisomerase (Dechloromonas aromatica (strain RCB)).